Here is a 187-residue protein sequence, read N- to C-terminus: dTTP/UTP pyrophosphatase (187 aa).

D65 functions as the Proton acceptor in the catalytic mechanism.

The protein belongs to the Maf family. YhdE subfamily. The cofactor is a divalent metal cation.

It localises to the cytoplasm. It carries out the reaction dTTP + H2O = dTMP + diphosphate + H(+). The enzyme catalyses UTP + H2O = UMP + diphosphate + H(+). Its function is as follows. Nucleoside triphosphate pyrophosphatase that hydrolyzes dTTP and UTP. May have a dual role in cell division arrest and in preventing the incorporation of modified nucleotides into cellular nucleic acids. This Deinococcus geothermalis (strain DSM 11300 / CIP 105573 / AG-3a) protein is dTTP/UTP pyrophosphatase.